The following is a 921-amino-acid chain: GPI ethanolamine phosphate transferase 1 (921 aa).

The chain crosses the membrane as a helical span at residues 37–57 (PGHVALIAGLYEDVSAVTTGW). N-linked (GlcNAc...) asparagine glycans are attached at residues N69 and N132. 10 consecutive transmembrane segments (helical) span residues 386–406 (ALIT…VIDL), 418–438 (TLIG…SFAI), 441–461 (SPLT…EVYA), 483–503 (FVSL…LALG), 509–529 (ILTI…FSFL), 533–553 (MALS…TLLP), 561–581 (VNMI…YLIL), 606–626 (LVGI…SSAL), 640–660 (VMGW…RAKP), and 679–699 (FVIL…AVLV). The segment at 715–737 (SANGAARSAPSPAKPHNLETSQT) is disordered. The next 4 helical transmembrane spans lie at 752-772 (VALF…NVAS), 795-815 (AMLI…LGIL), 825-845 (ALFM…FWVV), and 862-882 (VIAS…AMFI).

Belongs to the PIGG/PIGN/PIGO family. PIGN subfamily.

It is found in the endoplasmic reticulum membrane. It functions in the pathway glycolipid biosynthesis; glycosylphosphatidylinositol-anchor biosynthesis. Ethanolamine phosphate transferase involved in glycosylphosphatidylinositol-anchor biosynthesis. Transfers ethanolamine phosphate to the first alpha-1,4-linked mannose of the glycosylphosphatidylinositol precursor of GPI-anchor. In Chaetomium globosum (strain ATCC 6205 / CBS 148.51 / DSM 1962 / NBRC 6347 / NRRL 1970) (Soil fungus), this protein is GPI ethanolamine phosphate transferase 1 (MCD4).